We begin with the raw amino-acid sequence, 243 residues long: Carboxy-S-adenosyl-L-methionine synthase (243 aa).

Residues Tyr-40, 65-67, 90-91, 118-119, Asn-133, and Arg-200 each bind S-adenosyl-L-methionine; these read GSS, DN, and DI.

It belongs to the class I-like SAM-binding methyltransferase superfamily. Cx-SAM synthase family. In terms of assembly, homodimer.

It catalyses the reaction prephenate + S-adenosyl-L-methionine = carboxy-S-adenosyl-L-methionine + 3-phenylpyruvate + H2O. Its function is as follows. Catalyzes the conversion of S-adenosyl-L-methionine (SAM) to carboxy-S-adenosyl-L-methionine (Cx-SAM). This chain is Carboxy-S-adenosyl-L-methionine synthase, found in Shewanella frigidimarina (strain NCIMB 400).